Reading from the N-terminus, the 425-residue chain is Pleckstrin homology domain-containing family A member 2 (425 aa).

The 107-residue stretch at 7 to 113 (QNRICGFLDI…WVEALNQASK (107 aa)) folds into the PH 1 domain. K141 participates in a covalent cross-link: Glycyl lysine isopeptide (Lys-Gly) (interchain with G-Cter in SUMO2). The residue at position 184 (S184) is a Phosphoserine. In terms of domain architecture, PH 2 spans 198-298 (PLIKSGYCVK…WIKEIGAAVQ (101 aa)). Residues 312-330 (SISLTRPGSSSLSSGPNSI) are compositionally biased toward low complexity. The segment at 312–332 (SISLTRPGSSSLSSGPNSILC) is disordered. Phosphoserine occurs at positions 314 and 349. Positions 352–425 (SSWQPWTPVP…DDENIRTSDV (74 aa)) are disordered. Positions 400 to 410 (RSEPQHPKEKP) are enriched in basic and acidic residues.

As to quaternary structure, binds MPDZ and PTPN13. As to expression, highly expressed in heart, kidney, spleen and peripheral blood leukocytes. Detected at lower levels in brain, skeletal muscle, colon, thymus, liver, small intestine, placenta and lung.

The protein localises to the cytoplasm. It localises to the cell membrane. The protein resides in the nucleus. Binds specifically to phosphatidylinositol 3,4-diphosphate (PtdIns3,4P2), but not to other phosphoinositides. May recruit other proteins to the plasma membrane. The chain is Pleckstrin homology domain-containing family A member 2 (PLEKHA2) from Homo sapiens (Human).